We begin with the raw amino-acid sequence, 117 residues long: UPF0102 protein Spro_4337 (117 aa).

The protein belongs to the UPF0102 family.

This Serratia proteamaculans (strain 568) protein is UPF0102 protein Spro_4337.